A 274-amino-acid polypeptide reads, in one-letter code: Phosphatidylglycerol--prolipoprotein diacylglyceryl transferase (274 aa).

The next 4 membrane-spanning stretches (helical) occupy residues 19 to 39 (VGSVVIRWYGVLIAAAIVLGL), 59 to 79 (LAIWLVIGAIPCARLYYVLFQ), 93 to 113 (IWRGGIAIHGAILGGMLAALI), and 120 to 140 (VSFWQLADLVAPSLILGQAIG). Arg141 contacts a 1,2-diacyl-sn-glycero-3-phospho-(1'-sn-glycerol). 3 consecutive transmembrane segments (helical) span residues 181-201 (TFLYESVWNLMVLGILLALFF), 209-229 (GTIFLVYAVTYSLGRLWIEGL), and 243-263 (QVVSLIGIGIGMLGLTWLYLL).

Belongs to the Lgt family.

The protein localises to the cell inner membrane. It carries out the reaction L-cysteinyl-[prolipoprotein] + a 1,2-diacyl-sn-glycero-3-phospho-(1'-sn-glycerol) = an S-1,2-diacyl-sn-glyceryl-L-cysteinyl-[prolipoprotein] + sn-glycerol 1-phosphate + H(+). The protein operates within protein modification; lipoprotein biosynthesis (diacylglyceryl transfer). Catalyzes the transfer of the diacylglyceryl group from phosphatidylglycerol to the sulfhydryl group of the N-terminal cysteine of a prolipoprotein, the first step in the formation of mature lipoproteins. The polypeptide is Phosphatidylglycerol--prolipoprotein diacylglyceryl transferase (Acaryochloris marina (strain MBIC 11017)).